Consider the following 190-residue polypeptide: Protein GrpE (190 aa).

The protein belongs to the GrpE family. In terms of assembly, homodimer.

The protein localises to the cytoplasm. In terms of biological role, participates actively in the response to hyperosmotic and heat shock by preventing the aggregation of stress-denatured proteins, in association with DnaK and GrpE. It is the nucleotide exchange factor for DnaK and may function as a thermosensor. Unfolded proteins bind initially to DnaJ; upon interaction with the DnaJ-bound protein, DnaK hydrolyzes its bound ATP, resulting in the formation of a stable complex. GrpE releases ADP from DnaK; ATP binding to DnaK triggers the release of the substrate protein, thus completing the reaction cycle. Several rounds of ATP-dependent interactions between DnaJ, DnaK and GrpE are required for fully efficient folding. In Streptococcus agalactiae serotype III (strain NEM316), this protein is Protein GrpE.